Reading from the N-terminus, the 173-residue chain is Shikimate kinase 1 (173 aa).

14 to 19 (GAGKST) contributes to the ATP binding site. Serine 18 provides a ligand contact to Mg(2+). Aspartate 36, arginine 60, and glycine 82 together coordinate substrate. Arginine 120 is an ATP binding site. Arginine 140 serves as a coordination point for substrate. Glutamine 157 provides a ligand contact to ATP.

The protein belongs to the shikimate kinase family. Monomer. Mg(2+) serves as cofactor.

The protein resides in the cytoplasm. It carries out the reaction shikimate + ATP = 3-phosphoshikimate + ADP + H(+). The protein operates within metabolic intermediate biosynthesis; chorismate biosynthesis; chorismate from D-erythrose 4-phosphate and phosphoenolpyruvate: step 5/7. Functionally, catalyzes the specific phosphorylation of the 3-hydroxyl group of shikimic acid using ATP as a cosubstrate. The protein is Shikimate kinase 1 of Sodalis glossinidius (strain morsitans).